The primary structure comprises 41 residues: Large ribosomal subunit protein bL36 (41 aa).

It belongs to the bacterial ribosomal protein bL36 family.

This Beijerinckia indica subsp. indica (strain ATCC 9039 / DSM 1715 / NCIMB 8712) protein is Large ribosomal subunit protein bL36.